The following is a 210-amino-acid chain: Quaternary-amine-specific corrinoid protein (210 aa).

Residues 1–90 (MADWKNLTQA…VLGSGDTAVA (90 aa)) form the B12-binding N-terminal domain. The region spanning 90–210 (AGTILIGTAH…GVKICQAWVG (121 aa)) is the B12-binding domain. H103 provides a ligand contact to methylcob(III)alamin.

Belongs to the methylamine corrinoid protein family. The proline betaine:THF methyl transfer system is composed of two methyltransferases, MtpB and MtqA, and the corrinoid protein MtqC. The L-carnitine:THF methyl transfer system is composed of two methyltransferases, MtcB and MtqA, and the corrinoid protein MtqC.

Its function is as follows. Involved in the degradation of the quaternary amines L-proline betaine and L-carnitine. Component of a corrinoid-dependent methyltransferase system that transfers a methyl group from L-proline betaine or L-carnitine to tetrahydrofolate (THF), forming methyl-THF, a key intermediate in the Wood-Ljungdahl acetogenesis pathway. Acts as a methyl group carrier between MtpB or MtcB, and MtqA. A methyl group from L-proline betaine or L-carnitine is first transferred to the corrinoid prosthetic group of MtqC by MtpB or MtcB, respectively, and then transferred from MtqC to THF by MtqA. In Eubacterium limosum, this protein is Quaternary-amine-specific corrinoid protein.